Reading from the N-terminus, the 216-residue chain is Redox-sensing transcriptional repressor Rex (216 aa).

Residues 20–59 constitute a DNA-binding region (H-T-H motif); it reads QYYRLFKSLVEENVTRTNSQLISEKIGVDAATIRRDFSLF. 94–99 contributes to the NAD(+) binding site; it reads GVGNLG.

It belongs to the transcriptional regulatory Rex family. In terms of assembly, homodimer.

The protein localises to the cytoplasm. In terms of biological role, modulates transcription in response to changes in cellular NADH/NAD(+) redox state. The polypeptide is Redox-sensing transcriptional repressor Rex (Lactococcus lactis subsp. cremoris (Streptococcus cremoris)).